Here is a 408-residue protein sequence, read N- to C-terminus: Multidrug resistance protein MdtG (408 aa).

Helical transmembrane passes span 16–36 (LIVA…VMPF), 58–78 (IVFS…GGLA), 92–112 (LGMG…QFLI), 115–135 (ALLG…ATQV), 146–166 (TLST…GLLA), 173–193 (PVFF…LFCI), 221–241 (ILSL…IAPI), 256–276 (VAFI…LSAP), 290–310 (ILIT…YVQT), and 378–398 (AVFL…WNSL).

It belongs to the major facilitator superfamily. DHA1 family. MdtG (TC 2.A.1.2.20) subfamily.

It localises to the cell inner membrane. Its function is as follows. Confers resistance to fosfomycin and deoxycholate. The sequence is that of Multidrug resistance protein MdtG from Escherichia coli (strain SMS-3-5 / SECEC).